Consider the following 100-residue polypeptide: Large ribosomal subunit protein bL27 (100 aa).

Positions M1–F9 are excised as a propeptide.

It belongs to the bacterial ribosomal protein bL27 family. Post-translationally, the N-terminus is cleaved by ribosomal processing cysteine protease Prp.

The protein is Large ribosomal subunit protein bL27 of Clostridium botulinum (strain Hall / ATCC 3502 / NCTC 13319 / Type A).